The following is a 274-amino-acid chain: Protein bax (274 aa).

Residues 32–64 show a composition bias toward polar residues; it reads TTASQKSHLTKASNKQVSSKQEYSRNSAKSSSL. Residues 32-74 form a disordered region; it reads TTASQKSHLTKASNKQVSSKQEYSRNSAKSSSLPDLRKYPSGT. 247–254 contacts ATP; the sequence is GYSTKGKS.

The sequence is that of Protein bax (bax) from Escherichia coli (strain K12).